Here is an 89-residue protein sequence, read N- to C-terminus: Small ribosomal subunit protein uS15 (89 aa).

Belongs to the universal ribosomal protein uS15 family. Part of the 30S ribosomal subunit. Forms a bridge to the 50S subunit in the 70S ribosome, contacting the 23S rRNA.

In terms of biological role, one of the primary rRNA binding proteins, it binds directly to 16S rRNA where it helps nucleate assembly of the platform of the 30S subunit by binding and bridging several RNA helices of the 16S rRNA. Functionally, forms an intersubunit bridge (bridge B4) with the 23S rRNA of the 50S subunit in the ribosome. The sequence is that of Small ribosomal subunit protein uS15 from Halalkalibacterium halodurans (strain ATCC BAA-125 / DSM 18197 / FERM 7344 / JCM 9153 / C-125) (Bacillus halodurans).